A 714-amino-acid chain; its full sequence is Sodium-dependent acetylcholine transporter (714 aa).

The interval 1–21 (MSVSSNDPEQRNGRGMASGNN) is disordered. Residues 1 to 74 (MSVSSNDPEQ…GNWSNKSDYL (74 aa)) are Cytoplasmic-facing. The next 3 helical transmembrane spans lie at 75-95 (LAVIGFTAGVGSFWKFPFLVF), 100-120 (AAFLVPYLCMLCLASLPMFFM), and 152-172 (ISGFFAVFFNIISAWTLFYLI). Residues 173–257 (NSFSFSIPWS…LSKGVDDFGT (85 aa)) are Extracellular-facing. N-linked (GlcNAc...) asparagine glycans are attached at residues asparagine 192, asparagine 205, asparagine 211, and asparagine 222. The next 9 helical transmembrane spans lie at 258-278 (LNWYLGLCVLACWIAVFLCLF), 287-307 (VVYVAVIVPFIILTVLLTRLL), 336-356 (AAVQAFYSVSCCSGGLFTIAS), 368-388 (IWLVLIVDVIVSLVGCLLTFS), 422-442 (AGVSVAPLYAGLFFIMILLVV), 476-496 (VCALFILLSIPFCLSSGLFWM), 502-522 (FVLTWPLVVIAFLECMAINWV), 548-568 (ILFKFICPMVYLAILCFLWLD), and 584-604 (ILTAWCIASFPLILIPIVGIW). The Cytoplasmic portion of the chain corresponds to 605-714 (QFCIAKGTIT…IPKFERETAI (110 aa)).

This sequence belongs to the sodium:neurotransmitter symporter (SNF) (TC 2.A.22) family. As to quaternary structure, interacts with stn-1; part of the DGC. As to expression, body wall, and vulval and enteric muscles.

It is found in the cell membrane. The protein resides in the postsynaptic cell membrane. Its function is as follows. Mediates sodium-dependent uptake of acetylcholine at neuromuscular junctions during periods of increased synaptic activity, may also prevent spillover to adjacent synaptic sites. Not involved in the uptake of other neurotransmitters (GABA, glycine, proline and glutamate) and there was also no inhibition of uptake by adding an excess of other candidate substrates (GABA, glycine, taurine, creatine, proline, alanine, carnitine, glutamate and betaine). Required for muscle integrity; altered transport of acetylcholine due to loss of dystrophin-glycoprotein complex (DGC) function results in muscle degeneration. The protein is Sodium-dependent acetylcholine transporter of Caenorhabditis elegans.